Consider the following 372-residue polypeptide: Formylglycine-generating enzyme (372 aa).

Positions 1 to 31 (MAAPAREPALRCCIRLARVFLLLVLACEVAG) are cleaved as a signal peptide. A disulfide bond links Cys48 and Cys50. Residues 61–80 (SSAAAQRYSREANAPGLTSG) form a disordered region. Position 128 (Glu128) interacts with Ca(2+). Asn139 is a glycosylation site (N-linked (GlcNAc...) asparagine). 2 cysteine pairs are disulfide-bonded: Cys216–Cys363 and Cys233–Cys344. Ca(2+) is bound by residues Asn257, Ile258, Asp271, Phe273, Asn291, Gly294, and Glu298. Cu(2+) contacts are provided by Cys334 and Cys339. The segment at 339-358 (CYRYRCAARSQNTPDSSASN) is interaction with sulfatases.

It belongs to the sulfatase-modifying factor family. As to quaternary structure, monomer, homodimer and heterodimer with SUMF2. Cu(2+) is required as a cofactor. N-glycosylated. Contains high-mannose-type oligosaccharides.

It is found in the endoplasmic reticulum lumen. The enzyme catalyses L-cysteinyl-[sulfatase] + 2 a thiol + O2 = an organic disulfide + 3-oxo-L-alanyl-[sulfatase] + hydrogen sulfide + H2O + H(+). The protein operates within protein modification; sulfatase oxidation. Its function is as follows. Oxidase that catalyzes the conversion of cysteine to 3-oxoalanine on target proteins, using molecular oxygen and an unidentified reducing agent. 3-oxoalanine modification, which is also named formylglycine (fGly), occurs in the maturation of arylsulfatases and some alkaline phosphatases that use the hydrated form of 3-oxoalanine as a catalytic nucleophile. Known substrates include GALNS, ARSA, STS and ARSE. The polypeptide is Formylglycine-generating enzyme (Mus musculus (Mouse)).